Reading from the N-terminus, the 148-residue chain is Sperm-specific protein PHI-2B (148 aa).

The segment covering 1–35 (PSPSRRSRSRSRSRSKSPKRSPAKKARKTPKKRRA) has biased composition (basic residues). Disordered regions lie at residues 1–44 (PSPS…KPST) and 97–148 (GVLV…KSNN). The region spanning 40–119 (KKPSTLSMIV…GATGSFRVGK (80 aa)) is the H15 domain. Over residues 124 to 148 (PKKKAKKAKSPKKKSSKKSSNKSNN) the composition is skewed to basic residues.

Belongs to the histone H1/H5 family. As to expression, sperm.

Its subcellular location is the nucleus. It localises to the chromosome. Its function is as follows. Linker histones are implicated in chromatin remodeling and/or transcriptional regulation during spermiogenesis, the process of spermatid maturation into spermatozoa. The sequence is that of Sperm-specific protein PHI-2B from Mytilus californianus (California mussel).